A 258-amino-acid polypeptide reads, in one-letter code: Thiazole synthase (258 aa).

Lys-100 (schiff-base intermediate with DXP) is an active-site residue. 1-deoxy-D-xylulose 5-phosphate-binding positions include Gly-161, 187 to 188 (AG), and 209 to 210 (NT).

This sequence belongs to the ThiG family. In terms of assembly, homotetramer. Forms heterodimers with either ThiH or ThiS.

The protein resides in the cytoplasm. The catalysed reaction is [ThiS sulfur-carrier protein]-C-terminal-Gly-aminoethanethioate + 2-iminoacetate + 1-deoxy-D-xylulose 5-phosphate = [ThiS sulfur-carrier protein]-C-terminal Gly-Gly + 2-[(2R,5Z)-2-carboxy-4-methylthiazol-5(2H)-ylidene]ethyl phosphate + 2 H2O + H(+). It participates in cofactor biosynthesis; thiamine diphosphate biosynthesis. In terms of biological role, catalyzes the rearrangement of 1-deoxy-D-xylulose 5-phosphate (DXP) to produce the thiazole phosphate moiety of thiamine. Sulfur is provided by the thiocarboxylate moiety of the carrier protein ThiS. In vitro, sulfur can be provided by H(2)S. This Campylobacter jejuni (strain RM1221) protein is Thiazole synthase.